The chain runs to 466 residues: L-seryl-tRNA(Sec) selenium transferase (466 aa).

An N6-(pyridoxal phosphate)lysine modification is found at Lys293.

Belongs to the SelA family. Pyridoxal 5'-phosphate is required as a cofactor.

The protein localises to the cytoplasm. It carries out the reaction L-seryl-tRNA(Sec) + selenophosphate + H(+) = L-selenocysteinyl-tRNA(Sec) + phosphate. It participates in aminoacyl-tRNA biosynthesis; selenocysteinyl-tRNA(Sec) biosynthesis; selenocysteinyl-tRNA(Sec) from L-seryl-tRNA(Sec) (bacterial route): step 1/1. Functionally, converts seryl-tRNA(Sec) to selenocysteinyl-tRNA(Sec) required for selenoprotein biosynthesis. The chain is L-seryl-tRNA(Sec) selenium transferase from Desulfotalea psychrophila (strain LSv54 / DSM 12343).